The following is a 131-amino-acid chain: UPF0102 protein YraN (131 aa).

Residues 1-19 are compositionally biased toward polar residues; it reads MATVPTRSGSPRQLTTKQT. Positions 1–21 are disordered; it reads MATVPTRSGSPRQLTTKQTGD.

It belongs to the UPF0102 family.

This chain is UPF0102 protein YraN, found in Escherichia coli O7:K1 (strain IAI39 / ExPEC).